We begin with the raw amino-acid sequence, 185 residues long: Threonylcarbamoyl-AMP synthase (185 aa).

A YrdC-like domain is found at 1–185 (MDNLQQVVSA…AFSDTVLRQG (185 aa)).

Belongs to the SUA5 family. TsaC subfamily.

The protein localises to the cytoplasm. The catalysed reaction is L-threonine + hydrogencarbonate + ATP = L-threonylcarbamoyladenylate + diphosphate + H2O. Its function is as follows. Required for the formation of a threonylcarbamoyl group on adenosine at position 37 (t(6)A37) in tRNAs that read codons beginning with adenine. Catalyzes the conversion of L-threonine, HCO(3)(-)/CO(2) and ATP to give threonylcarbamoyl-AMP (TC-AMP) as the acyladenylate intermediate, with the release of diphosphate. The chain is Threonylcarbamoyl-AMP synthase from Photobacterium profundum (strain SS9).